We begin with the raw amino-acid sequence, 97 residues long: Small ribosomal subunit protein bS6 (97 aa).

Belongs to the bacterial ribosomal protein bS6 family.

In terms of biological role, binds together with bS18 to 16S ribosomal RNA. This chain is Small ribosomal subunit protein bS6, found in Dictyoglomus turgidum (strain DSM 6724 / Z-1310).